The chain runs to 235 residues: MAREGKRIRAAREGIDPTKVYSLTDAVKMIKDRSKAKFDETFEISMNLGVDPRHADQMVRGVCNLPNGSGRTVRVAVFARGAKADEARAAGADIVGAEDLLETIQGGTIDFDRCIATPDMMPLVGRLGKVLGPRGLMPNPKVGTVTMDVKGAVGAAKGGAVEFRVEKAGIVHAGIGKVSFDDQKIVENARAFADAVARAKPTGAKGTYIQRIAVSSTMGPGIKVDPASVLAAQSA.

Belongs to the universal ribosomal protein uL1 family. As to quaternary structure, part of the 50S ribosomal subunit.

Binds directly to 23S rRNA. The L1 stalk is quite mobile in the ribosome, and is involved in E site tRNA release. Functionally, protein L1 is also a translational repressor protein, it controls the translation of the L11 operon by binding to its mRNA. The polypeptide is Large ribosomal subunit protein uL1 (Methylobacterium sp. (strain 4-46)).